Consider the following 1068-residue polypeptide: Protein AF-10 (1068 aa).

The PHD-type 1 zinc-finger motif lies at 22 to 74 (IGGCCVCSDERGWAENPLVYCDGHGCSVAVHQACYGIVQVPTGPWFCRKCESQ). A C2HC pre-PHD-type zinc finger spans residues 79-112 (RVRCELCPHKDGALKRTDNGGWAHVVCALYIPEV). The segment at 106–190 (ALYIPEVQFA…EGNGADNVQY (85 aa)) is required for interaction with histone H3. Residues 135 to 198 (KTCYICDEQG…QYCGYCKYHF (64 aa)) form a PHD-type 2 zinc finger. The interval 207–260 (GSNRSYEQSLSDSSSHSQDKHHEKEKKKYKEKDKHKQKHKKQPEPSPALVPSLT) is disordered. Ser217 is subject to Phosphoserine. The segment covering 223–240 (SQDKHHEKEKKKYKEKDK) has biased composition (basic and acidic residues). Ser252 carries the phosphoserine modification. Lys280 is covalently cross-linked (Glycyl lysine isopeptide (Lys-Gly) (interchain with G-Cter in SUMO2)). Residues 296–305 (EVSAHTSSGK) show a composition bias toward polar residues. Disordered stretches follow at residues 296–416 (EVSA…SFSS) and 428–506 (SQPK…SVAS). A compositionally biased stretch (basic and acidic residues) spans 306 to 317 (DVSEARGSEGKG). The segment covering 340-351 (TAVSASSPFPQG) has biased composition (polar residues). The segment covering 352-372 (SFSGTPGSVKSSSGSSVQSPQ) has biased composition (low complexity). 3 stretches are compositionally biased toward polar residues: residues 387-396 (YTHTQQPSST), 404-416 (SGSQ…SFSS), and 428-446 (SQPK…SSLP). At Ser436 the chain carries Phosphoserine. Basic residues predominate over residues 465–483 (EKKRKGNKQSKHGPGRPKG). A compositionally biased stretch (low complexity) spans 490 to 506 (VSHLSVSSASPTSSVAS). Ser532 carries the phosphoserine modification. Positions 583-594 (SGSGSSTPVSSS) are enriched in low complexity. Disordered regions lie at residues 583 to 613 (SGSG…LSPS) and 660 to 698 (SESS…NLQL). The segment covering 595–604 (HIPQQSSGHL) has biased composition (polar residues). Low complexity predominate over residues 681–692 (SSPRGSLSPRSP). Phosphoserine is present on residues Ser686, Ser688, and Ser691. The interval 752-780 (LQVENRRLEEQIKNLTAKKERLQLLNAQL) is leucine-zipper. 2 disordered regions span residues 786-869 (AITT…VSGV) and 1040-1068 (PFLT…QEKS). Positions 787–816 (ITTNPSPSHQMHTYTAQTAPPPDSLNSSKS) are enriched in polar residues. Composition is skewed to low complexity over residues 836 to 850 (LTSS…SALS) and 857 to 869 (QSPA…VSGV). The span at 1040-1054 (PFLTIHGDSTSQKVT) shows a compositional bias: polar residues.

Self-associates. Interacts with FSTL3; the interaction enhances MLLT10 in vitro transcriptional activity and self-association. Interacts with YEATS4. Interacts with SS18. Interacts with DOT1L. Interacts with histone H3; interaction is necessary for MLLT10 binding to nucleosomes; interaction is inhibited by histone H3 'Lys-27' methylations (H3K27me1, H3K27me2 and H3K27me3) amd acetylation; interaction stabilizes association of MLLT10 at chromatin; interaction is essential for histone H3 'Lys-79' dimethylation (H3K79me2).

The protein localises to the nucleus. Its function is as follows. Probably involved in transcriptional regulation. Binds to cruciform DNA. In cells, binding to unmodified histone H3 regulates DOT1L functions including histone H3 'Lys-79' dimethylation (H3K79me2) and gene activation. This chain is Protein AF-10, found in Mus musculus (Mouse).